A 491-amino-acid polypeptide reads, in one-letter code: Glutamate--tRNA ligase (491 aa).

The 'HIGH' region motif lies at 9-19 (PSPTGTPHVGL). Residues 253-257 (KLSKR) carry the 'KMSKS' region motif. Residue Lys256 coordinates ATP.

It belongs to the class-I aminoacyl-tRNA synthetase family. Glutamate--tRNA ligase type 1 subfamily. As to quaternary structure, monomer.

It localises to the cytoplasm. The enzyme catalyses tRNA(Glu) + L-glutamate + ATP = L-glutamyl-tRNA(Glu) + AMP + diphosphate. Its function is as follows. Catalyzes the attachment of glutamate to tRNA(Glu) in a two-step reaction: glutamate is first activated by ATP to form Glu-AMP and then transferred to the acceptor end of tRNA(Glu). The protein is Glutamate--tRNA ligase of Mycolicibacterium gilvum (strain PYR-GCK) (Mycobacterium gilvum (strain PYR-GCK)).